Reading from the N-terminus, the 570-residue chain is Enhancer of polycomb-like protein 1 (570 aa).

The interval 541–570 (ALNNLNSGQTSGQTMGSNPGPGAIAPTPET) is disordered. Residues 543–557 (NNLNSGQTSGQTMGS) are compositionally biased toward polar residues.

Belongs to the enhancer of polycomb family. In terms of assembly, component of the NuA4 histone acetyltransferase complex.

It is found in the nucleus. In terms of biological role, component of the NuA4 histone acetyltransferase complex which is involved in transcriptional activation of selected genes principally by acetylation of nucleosomal histone H4 and H2A. The NuA4 complex is also involved in DNA repair. Involved in gene silencing by neighboring heterochromatin, blockage of the silencing spreading along the chromosome, and required for cell cycle progression through G2/M. This chain is Enhancer of polycomb-like protein 1 (epl1), found in Emericella nidulans (strain FGSC A4 / ATCC 38163 / CBS 112.46 / NRRL 194 / M139) (Aspergillus nidulans).